A 101-amino-acid polypeptide reads, in one-letter code: MKSERLERTAVEAELAGLAGWALNDAASSISKTFKFSNFIEAFGFMTEAAITAEKLNHHPEWFNVYSRVDVTLNTHDAGGLTELDFKLARAMEKAAARRLR.

This sequence belongs to the pterin-4-alpha-carbinolamine dehydratase family.

The enzyme catalyses (4aS,6R)-4a-hydroxy-L-erythro-5,6,7,8-tetrahydrobiopterin = (6R)-L-erythro-6,7-dihydrobiopterin + H2O. The sequence is that of Putative pterin-4-alpha-carbinolamine dehydratase from Rhizobium etli (strain ATCC 51251 / DSM 11541 / JCM 21823 / NBRC 15573 / CFN 42).